A 336-amino-acid polypeptide reads, in one-letter code: Abasic site processing protein HMCES (336 aa).

Cys2 functions as the Nucleophile in the catalytic mechanism. Thiazolidine linkage to a ring-opened DNA abasic site is present on Cys2. Positions Gln29–Tyr38 are enriched in basic and acidic residues. Residues Gln29 to Val52 are disordered. The active site involves Glu127. A disordered region spans residues Leu283–Ala336.

This sequence belongs to the SOS response-associated peptidase family.

It is found in the chromosome. Formation and reversal of DNA-protein cross-link depends on DNA context. Catalyzes formation of the thiazolidine linkage in presence of abasic sites in single-stranded DNA. Mediates the reversal of the thiazolidine cross-link in presence of double stranded DNA. Its function is as follows. Sensor of abasic sites in single-stranded DNA (ssDNA) required to preserve genome integrity by promoting error-free repair of abasic sites. Acts as an enzyme that recognizes and binds abasic sites in ssDNA at replication forks and chemically modifies the lesion by forming a covalent cross-link with DNA: forms a stable thiazolidine linkage between a ring-opened abasic site and the alpha-amino and sulfhydryl substituents of its N-terminal catalytic cysteine residue. The HMCES DNA-protein cross-link is then either reversed or degraded. HMCES is able to catalyze the reversal of its thiazolidine cross-link and cycle between a cross-link and a non-cross-linked state depending on DNA context: mediates self-reversal of the thiazolidine cross-link in double stranded DNA, allowing APEX1 to initiate downstream repair of abasic sites. The HMCES DNA-protein cross-link can also be degraded by the SPRTN metalloprotease following unfolding by the BRIP1/FANCJ helicase. Promotes error-free repair of abasic sites by protecting abasic sites from translesion synthesis (TLS) polymerases and endonucleases that are error-prone and would generate mutations and double-strand breaks. Acts as a protease: mediates autocatalytic processing of its N-terminal methionine in order to expose the catalytic cysteine. The HMCES DNA-protein cross-link is then either reversed or degraded. According to a model, the HMCES DNA-protein cross-link. The sequence is that of Abasic site processing protein HMCES from Gallus gallus (Chicken).